We begin with the raw amino-acid sequence, 408 residues long: Serine/threonine transporter SstT (408 aa).

Helical transmembrane passes span 11–31 (LANG…VALA), 43–63 (FLGS…VFIL), 82–102 (IVVL…ILSM), 141–161 (ALMT…GLAL), 192–212 (IGIF…AIAG), 216–236 (LLAV…PLIV), 290–310 (IPLG…VLTL), 316–336 (LGIQ…AISA), and 363–383 (VAMQ…AAET).

The protein belongs to the dicarboxylate/amino acid:cation symporter (DAACS) (TC 2.A.23) family.

The protein localises to the cell inner membrane. It carries out the reaction L-serine(in) + Na(+)(in) = L-serine(out) + Na(+)(out). The enzyme catalyses L-threonine(in) + Na(+)(in) = L-threonine(out) + Na(+)(out). Involved in the import of serine and threonine into the cell, with the concomitant import of sodium (symport system). In Shewanella oneidensis (strain ATCC 700550 / JCM 31522 / CIP 106686 / LMG 19005 / NCIMB 14063 / MR-1), this protein is Serine/threonine transporter SstT.